The following is a 1254-amino-acid chain: Vitamin B12-dependent ribonucleotide reductase (1254 aa).

Substrate-binding positions include Ser153, 198 to 199 (AC), Gly230, 474 to 478 (NPCSE), and 675 to 679 (PTGTI). Cys199 and Cys487 are disulfide-bonded. Asn474 (proton acceptor) is an active-site residue. Cys476 acts as the Cysteine radical intermediate in catalysis. Glu478 serves as the catalytic Proton acceptor.

The protein belongs to the ribonucleoside diphosphate reductase class-2 family. Adenosylcob(III)alamin serves as cofactor.

The enzyme catalyses a 2'-deoxyribonucleoside 5'-diphosphate + [thioredoxin]-disulfide + H2O = a ribonucleoside 5'-diphosphate + [thioredoxin]-dithiol. Functionally, catalyzes the reduction of ribonucleotides to deoxyribonucleotides. May function to provide a pool of deoxyribonucleotide precursors for DNA repair during oxygen limitation and/or for immediate growth after restoration of oxygen. This Bradyrhizobium diazoefficiens (strain JCM 10833 / BCRC 13528 / IAM 13628 / NBRC 14792 / USDA 110) protein is Vitamin B12-dependent ribonucleotide reductase (nrdJ).